Here is a 334-residue protein sequence, read N- to C-terminus: Holliday junction branch migration complex subunit RuvB (334 aa).

A large ATPase domain (RuvB-L) region spans residues 1 to 181 (MTRILDNDLM…FGITGHMEYY (181 aa)). ATP-binding positions include Leu20, Arg21, Gly62, Lys65, Thr66, Thr67, 128–130 (EDF), Arg171, Tyr181, and Arg218. Mg(2+) is bound at residue Thr66. The segment at 182–252 (QVDDLTEIVE…MTDKALEMLD (71 aa)) is small ATPAse domain (RuvB-S). The interval 255 to 334 (HEGLDYVDQK…LKYPLDTKTE (80 aa)) is head domain (RuvB-H). Positions 291, 310, 312, and 315 each coordinate DNA.

Belongs to the RuvB family. Homohexamer. Forms an RuvA(8)-RuvB(12)-Holliday junction (HJ) complex. HJ DNA is sandwiched between 2 RuvA tetramers; dsDNA enters through RuvA and exits via RuvB. An RuvB hexamer assembles on each DNA strand where it exits the tetramer. Each RuvB hexamer is contacted by two RuvA subunits (via domain III) on 2 adjacent RuvB subunits; this complex drives branch migration. In the full resolvosome a probable DNA-RuvA(4)-RuvB(12)-RuvC(2) complex forms which resolves the HJ.

The protein localises to the cytoplasm. The enzyme catalyses ATP + H2O = ADP + phosphate + H(+). In terms of biological role, the RuvA-RuvB-RuvC complex processes Holliday junction (HJ) DNA during genetic recombination and DNA repair, while the RuvA-RuvB complex plays an important role in the rescue of blocked DNA replication forks via replication fork reversal (RFR). RuvA specifically binds to HJ cruciform DNA, conferring on it an open structure. The RuvB hexamer acts as an ATP-dependent pump, pulling dsDNA into and through the RuvAB complex. RuvB forms 2 homohexamers on either side of HJ DNA bound by 1 or 2 RuvA tetramers; 4 subunits per hexamer contact DNA at a time. Coordinated motions by a converter formed by DNA-disengaged RuvB subunits stimulates ATP hydrolysis and nucleotide exchange. Immobilization of the converter enables RuvB to convert the ATP-contained energy into a lever motion, pulling 2 nucleotides of DNA out of the RuvA tetramer per ATP hydrolyzed, thus driving DNA branch migration. The RuvB motors rotate together with the DNA substrate, which together with the progressing nucleotide cycle form the mechanistic basis for DNA recombination by continuous HJ branch migration. Branch migration allows RuvC to scan DNA until it finds its consensus sequence, where it cleaves and resolves cruciform DNA. This chain is Holliday junction branch migration complex subunit RuvB, found in Streptococcus uberis (strain ATCC BAA-854 / 0140J).